Reading from the N-terminus, the 648-residue chain is Indolepyruvate oxidoreductase subunit IorA (648 aa).

4Fe-4S ferredoxin-type domains are found at residues 585-614 (PIYQ…WDAE) and 616-645 (KKAR…KVRE). [4Fe-4S] cluster contacts are provided by Cys-594, Cys-597, Cys-600, Cys-606, Cys-625, Cys-628, Cys-631, and Cys-635.

As to quaternary structure, heterodimer of the IorA and IorB subunits. [4Fe-4S] cluster serves as cofactor.

It catalyses the reaction indole-3-pyruvate + 2 oxidized [2Fe-2S]-[ferredoxin] + CoA = (indol-3-yl)acetyl-CoA + 2 reduced [2Fe-2S]-[ferredoxin] + CO2 + H(+). Functionally, catalyzes the ferredoxin-dependent oxidative decarboxylation of arylpyruvates. The sequence is that of Indolepyruvate oxidoreductase subunit IorA (iorA) from Pyrococcus horikoshii (strain ATCC 700860 / DSM 12428 / JCM 9974 / NBRC 100139 / OT-3).